A 253-amino-acid polypeptide reads, in one-letter code: MKFCIIGYPVSHSISPRLYNEYFKRAGMNHSYGMEEIPPESFDTEIRRILEEYDGFNATIPHKERVMRYVEPSEDAQRIKAVNCVFRGKGYNTDWVGVVKSLEGVEVKEPVVVVGAGGAARAVIYALLQMGVKDIWVVNRTIERAKALDFPVKIFSLDQLDEVVKKAKSLFNTTSVGMKGEKLTVSEASLKGLYLVYDVVYFETPLVSDAKRLGVEHVVKGNLMFYYQAMENLKIWGIYDERSFKEVFEEVLR.

Lys63 acts as the Proton acceptor in catalysis. Gly115–Ala119 is an NADP(+) binding site.

The protein belongs to the shikimate dehydrogenase family.

The enzyme catalyses shikimate + NADP(+) = 3-dehydroshikimate + NADPH + H(+). The protein operates within metabolic intermediate biosynthesis; chorismate biosynthesis; chorismate from D-erythrose 4-phosphate and phosphoenolpyruvate: step 4/7. In Thermotoga neapolitana (strain ATCC 49049 / DSM 4359 / NBRC 107923 / NS-E), this protein is Shikimate dehydrogenase (aroE).